A 154-amino-acid chain; its full sequence is Protein X (154 aa).

The interval 68 to 117 (PCALRFTSARRMETTVNAHRNLPKVLHKRTLGLSAMSTTDLEAHFKDCVF) is mitochondrial targeting sequence.

The protein belongs to the orthohepadnavirus protein X family. In terms of assembly, may form homodimer. May interact with host CEBPA, CFLAR, CREB1, DDB1, E4F1, HBXIP, HSPD1/HSP60, NFKBIA, POLR2E and SMAD4. Interacts with host SMC5-SMC6 complex and induces its degradation. Interacts with host TRPC4AP; leading to prevent ubiquitination of TRPC4AP. Interacts with host PLSCR1; this interaction promotes ubiquitination and degradation of HBx and impairs HBx-mediated cell proliferation. Post-translationally, a fraction may be phosphorylated in insect cells and HepG2 cells, a human hepatoblastoma cell line. Phosphorylated in vitro by host protein kinase C or mitogen-activated protein kinase. N-acetylated in insect cells.

It is found in the host cytoplasm. Its subcellular location is the host nucleus. The protein resides in the host mitochondrion. Its function is as follows. Multifunctional protein that plays a role in silencing host antiviral defenses and promoting viral transcription. Does not seem to be essential for HBV infection. May be directly involved in development of cirrhosis and liver cancer (hepatocellular carcinoma). Most of cytosolic activities involve modulation of cytosolic calcium. The effect on apoptosis is controversial depending on the cell types in which the studies have been conducted. May induce apoptosis by localizing in mitochondria and causing loss of mitochondrial membrane potential. May also modulate apoptosis by binding host CFLAR, a key regulator of the death-inducing signaling complex (DISC). Promotes viral transcription by using the host E3 ubiquitin ligase DDB1 to target the SMC5-SMC6 complex to proteasomal degradation. This host complex would otherwise bind to viral episomal DNA, and prevents its transcription. Moderately stimulates transcription of many different viral and cellular transcription elements. Promoters and enhancers stimulated by HBx contain DNA binding sites for NF-kappa-B, AP-1, AP-2, c-EBP, ATF/CREB, or the calcium-activated factor NF-AT. This is Protein X from Hepatitis B virus genotype B2 (isolate Indonesia/pIDW420/1988) (HBV-B).